A 403-amino-acid polypeptide reads, in one-letter code: F-box/kelch-repeat protein At5g39560 (403 aa).

The F-box domain occupies 26-72; that stretch reads PPSLMSLPYEIIENILARISKWSYPNLSLVSKSFLSLLSSPQLYKTR. 4 Kelch repeats span residues 138–182, 184–229, 248–294, and 296–340; these read EIYV…LIDQ, IYVL…VWPN, NPNA…IENV, and YACH…VNYG.

This chain is F-box/kelch-repeat protein At5g39560, found in Arabidopsis thaliana (Mouse-ear cress).